The chain runs to 219 residues: Probable GTP-binding protein EngB (219 aa).

Residues 31 to 205 (VGVEIAFAGR…LSILNEWCHP (175 aa)) form the EngB-type G domain. Residues 39-46 (GRSNAGKS), 66-70 (GRTQL), 84-87 (DLPG), 151-154 (TKSD), and 184-186 (FSA) each bind GTP. Residues serine 46 and threonine 68 each contribute to the Mg(2+) site.

This sequence belongs to the TRAFAC class TrmE-Era-EngA-EngB-Septin-like GTPase superfamily. EngB GTPase family. Requires Mg(2+) as cofactor.

Functionally, necessary for normal cell division and for the maintenance of normal septation. In Shewanella putrefaciens (strain CN-32 / ATCC BAA-453), this protein is Probable GTP-binding protein EngB.